Here is a 161-residue protein sequence, read N- to C-terminus: Multiprotein-bridging factor 1 (161 aa).

Residues 1 to 66 (MADDWDTVTK…RSEAGSGQFL (66 aa)) are disordered. Residues 14–23 (RVGGGGGGGP) are compositionally biased toward gly residues. Composition is skewed to polar residues over residues 27–36 (TIKNKSQLNA) and 52–65 (TANS…SGQF). An HTH cro/C1-type domain is found at 90-144 (MQNREQKKLGNRLEFGKKVGINEKDLARIEKGEVPITQDQVNRIERGLEMFIRGV). The segment at residues 101 to 120 (RLEFGKKVGINEKDLARIEK) is a DNA-binding region (H-T-H motif).

Belongs to the MBF1 family.

Transcriptional coactivator that stimulates GCN4-dependent transcriptional activity by bridging the DNA-binding region of GCN4 and TBP (SPT15), thereby recruiting TBP to GCN4-bound promoters. Involved in induction of the ribosome quality control (RQC) pathway; a pathway that degrades nascent peptide chains during problematic translation. Required to prevent stalled ribosomes from frameshifting. In Pyricularia oryzae (strain 70-15 / ATCC MYA-4617 / FGSC 8958) (Rice blast fungus), this protein is Multiprotein-bridging factor 1 (MBF1).